The sequence spans 151 residues: MEAQLHAKPHAQGEWSTGFCDCFSDCRNCCITLCCPCITFGQVAEIVDRGSKSCCAAGALYMLIDLITSCGRMYACFYSGKMRAQYNIKGDGCTDCLKHFCCNLCALTQQYRELKHRGFDMSLGWAGNAEKQQNQGGVAMGAPAFQGGMTR.

The next 2 membrane-spanning stretches (helical) occupy residues 31–47 (ITLC…AEIV) and 54–71 (CCAA…TSCG).

The protein belongs to the cornifelin family. As to quaternary structure, homopentamer. As to expression, expressed in aerial part, but not in roots. Detected in the guard and mesophyll cells.

Its subcellular location is the cell membrane. In terms of biological role, involved in glutathione-independent cadmium resistance. Reduces cadmium uptake rather than activating efflux, but is not closely coupled to calcium transporter. The polypeptide is Protein PLANT CADMIUM RESISTANCE 1 (PCR1) (Arabidopsis thaliana (Mouse-ear cress)).